The following is a 282-amino-acid chain: NFU1 iron-sulfur cluster scaffold homolog, mitochondrial (282 aa).

A mitochondrion-targeting transit peptide spans 1–27; that stretch reads MSKLLSYTARIILRNSRITVRQLVRGF. The segment at 178–246 is nifU; the sequence is IKELLDTRIR…IPEVESVEQV (69 aa). 2 residues coordinate [4Fe-4S] cluster: cysteine 215 and cysteine 218. The segment at 263 to 282 is disordered; the sequence is KNLKQKEPAGAPVGIGGGPN.

This sequence belongs to the NifU family.

The protein resides in the mitochondrion. Its function is as follows. Molecular scaffold for [Fe-S] cluster assembly of mitochondrial iron-sulfur proteins. This chain is NFU1 iron-sulfur cluster scaffold homolog, mitochondrial, found in Drosophila persimilis (Fruit fly).